Reading from the N-terminus, the 161-residue chain is Regulator of ribonuclease activity A (161 aa).

The protein belongs to the RraA family. Homotrimer. Binds to both RNA-binding sites in the C-terminal region of Rne and to RhlB.

Its subcellular location is the cytoplasm. In terms of biological role, globally modulates RNA abundance by binding to RNase E (Rne) and regulating its endonucleolytic activity. Can modulate Rne action in a substrate-dependent manner by altering the composition of the degradosome. Modulates RNA-binding and helicase activities of the degradosome. In Klebsiella pneumoniae (strain 342), this protein is Regulator of ribonuclease activity A.